Reading from the N-terminus, the 142-residue chain is MRALLDVNVLLALLDRDHVDHERARAWITGQIERGWASCAITQNGFVRVISQPRYPSPISVAHAIDLLARATHTRYHEFWSCTVSILDSKVIDRSRLHSPKQVTDAYLLALAVAHDGRFVTFDQSIALTAVPGATKQHLATL.

Residues 4-126 form the PINc domain; that stretch reads LLDVNVLLAL…GRFVTFDQSI (123 aa). Mg(2+) is bound by residues aspartate 6 and aspartate 105.

It belongs to the PINc/VapC protein family. The cofactor is Mg(2+).

Functionally, toxic component of a type II toxin-antitoxin (TA) system. An RNase. Its cognate antitoxin is VapB44. The polypeptide is Ribonuclease VapC44 (Mycobacterium tuberculosis (strain CDC 1551 / Oshkosh)).